The sequence spans 49 residues: Large ribosomal subunit protein bL32 (49 aa).

Belongs to the bacterial ribosomal protein bL32 family.

In Nautilia profundicola (strain ATCC BAA-1463 / DSM 18972 / AmH), this protein is Large ribosomal subunit protein bL32.